A 392-amino-acid polypeptide reads, in one-letter code: Cytochrome P450 monooxygenase ppzE (392 aa).

A helical transmembrane segment spans residues 10-30; the sequence is LELVWFVALYPFACWTLFAVL. Asn319 carries N-linked (GlcNAc...) asparagine glycosylation. Cys353 serves as a coordination point for heme. The N-linked (GlcNAc...) asparagine glycan is linked to Asn372.

Belongs to the cytochrome P450 family. Heme is required as a cofactor.

The protein resides in the membrane. The protein operates within secondary metabolite biosynthesis. Cytochrome P450 monooxygenase; part of the gene cluster that mediates the biosynthesis of pyrrolopyrazines, secondary metabolites showing insecticidal activity. The role of ppzE within the pathway has still to be determined. The single multifunctional NRPS ppzA is sufficient to produce peramine via condensation of 1-pyrroline-5-carboxylate and arginine, N-methylation of the alpha-amino group of arginine and reduction of the thioester and the cyclization to form an iminium ion resulting in release from the peptide synthetase. Deprotonation of this intermediate and oxidation of the pyrroline ring would give rise to peramine. In Epichloe species that produce only peramine, the peramine synthetase gene is not localized in a gene cluster, in contrast to Metarhizium species that contain additional pyrrolopyrazine biosynthesis genes. The 2-oxoglutarate-Fe(II) type oxidoreductase ppzC hydroxylates peramine to yield the newly identified compound 8-hydroxyperamine whereas ppzD converts L-proline into trans-4-hydroxy-L-proline, a precursor of peramine biosynthesis. The chain is Cytochrome P450 monooxygenase ppzE from Metarhizium rileyi (strain RCEF 4871) (Nomuraea rileyi).